Here is a 137-residue protein sequence, read N- to C-terminus: Large ribosomal subunit protein uL16 (137 aa).

This sequence belongs to the universal ribosomal protein uL16 family. In terms of assembly, part of the 50S ribosomal subunit.

Binds 23S rRNA and is also seen to make contacts with the A and possibly P site tRNAs. The sequence is that of Large ribosomal subunit protein uL16 from Lactococcus lactis subsp. cremoris (strain SK11).